The sequence spans 345 residues: Protein-glutamate methylesterase/protein-glutamine glutaminase (345 aa).

Positions 5–123 (KVIVVDDSVL…ELSKMKDDLI (119 aa)) constitute a Response regulatory domain. Residue D56 is modified to 4-aspartylphosphate. The CheB-type methylesterase domain occupies 153-343 (SSDSIEAVVI…DEIIKIVRGL (191 aa)). Residues S165, H192, and D285 contribute to the active site.

The protein belongs to the CheB family. In terms of processing, phosphorylated by CheA. Phosphorylation of the N-terminal regulatory domain activates the methylesterase activity.

It is found in the cytoplasm. The catalysed reaction is [protein]-L-glutamate 5-O-methyl ester + H2O = L-glutamyl-[protein] + methanol + H(+). It carries out the reaction L-glutaminyl-[protein] + H2O = L-glutamyl-[protein] + NH4(+). Involved in chemotaxis. Part of a chemotaxis signal transduction system that modulates chemotaxis in response to various stimuli. Catalyzes the demethylation of specific methylglutamate residues introduced into the chemoreceptors (methyl-accepting chemotaxis proteins or MCP) by CheR. Also mediates the irreversible deamidation of specific glutamine residues to glutamic acid. This Clostridium acetobutylicum (strain ATCC 824 / DSM 792 / JCM 1419 / IAM 19013 / LMG 5710 / NBRC 13948 / NRRL B-527 / VKM B-1787 / 2291 / W) protein is Protein-glutamate methylesterase/protein-glutamine glutaminase.